A 643-amino-acid chain; its full sequence is MTLTLSVLICLGLNVGPRTCVQAGTLPKPTLWAEPASVIARGKPVTLWCQGPLETEEYRLDKEGLPWAWERQNPLEPGAKAKFHILSTVYDSAGRYRCYYETPAGWSEPSDPLELVATGFYAEPTLLALPSPVVASGGNVTLQCDTRDGLLTFVLVEEEQKLPRTLYSQKLPKGPSRALFPVGPVTPSFRWRFRCYYYYRKNPQVWSHPSDLLEILVPGVSRKPSLLIPQGSVVARGGSLTLQCRSDVGYDRFVLYKEGGHDLVQGSGQQPQAGLSQANFTLSPVSRSYGGQYRCYGAHNLSPRWSAPSDPLDILIAGLIPDRPSLSVQPGPTVASGENVTLLCQSWRQIDTFFLTKEGAAHPPLCLKSKYQFYKYQAEFSMSPVTSARGGTYRCYSAIRSYPHLLSSPSYPLELVVSGPSGDPSLSPTGSTPTPGPEDQPLTPTGLDPQSGLGRHLGVVTGVSVAFVLLLFLLLFLLLRHRHQSKHRTSAHFYRPAGAAGPEPKDQVLQKRASPVADTQEEILNAAVKDTQPKDGAEMDARQSPRDEDPQAVTYAEVKHSRPRREMASPPSPLSGEFLDTKDTQAEEDRQMDTQAAASEAPQDVTYAQLHSLTLRREATEPPPSQEREPPAEPSIYAPLAIH.

The first 23 residues, 1–23, serve as a signal peptide directing secretion; it reads MTLTLSVLICLGLNVGPRTCVQA. The Extracellular segment spans residues 24-458; it reads GTLPKPTLWA…PQSGLGRHLG (435 aa). Ig-like C2-type domains follow at residues 27–116, 111–228, 224–313, and 337–418; these read PKPT…LELV, DPLE…SLLI, PSLL…DPLD, and GENV…LVVS. A disulfide bridge links Cys-49 with Cys-98. Asn-139 carries N-linked (GlcNAc...) asparagine glycosylation. 2 cysteine pairs are disulfide-bonded: Cys-144–Cys-195 and Cys-244–Cys-295. N-linked (GlcNAc...) asparagine glycosylation is found at Asn-279 and Asn-339. Cysteines 344 and 395 form a disulfide. Over residues 417 to 433 the composition is skewed to low complexity; it reads VSGPSGDPSLSPTGSTP. The segment at 417-449 is disordered; the sequence is VSGPSGDPSLSPTGSTPTPGPEDQPLTPTGLDP. Residues 459–479 traverse the membrane as a helical segment; that stretch reads VVTGVSVAFVLLLFLLLFLLL. The Cytoplasmic portion of the chain corresponds to 480-643; sequence RHRHQSKHRT…PSIYAPLAIH (164 aa). The segment at 493-643 is disordered; sequence FYRPAGAAGP…PSIYAPLAIH (151 aa). Ser-514 carries the post-translational modification Phosphoserine. Composition is skewed to basic and acidic residues over residues 531-549, 557-567, and 579-592; these read TQPKDGAEMDARQSPRDED, EVKHSRPRREM, and LDTKDTQAEEDRQM. Positions 605–610 match the ITIM motif 1 motif; sequence VTYAQL. Residues 615 to 631 are compositionally biased toward basic and acidic residues; sequence LRREATEPPPSQEREPP. An ITIM motif 2 motif is present at residues 635–640; sequence SIYAPL.

The protein resides in the membrane. May act as receptor for class I MHC antigens. This is Leukocyte immunoglobulin-like receptor subfamily B member 5 (LILRB5) from Pan troglodytes (Chimpanzee).